Reading from the N-terminus, the 537-residue chain is Putative cysteine ligase BshC (537 aa).

A coiled-coil region spans residues 422–450 (IEKVEGMIEQQRRLNKDLLDEVAGNQNNI).

The protein belongs to the BshC family.

Functionally, involved in bacillithiol (BSH) biosynthesis. May catalyze the last step of the pathway, the addition of cysteine to glucosamine malate (GlcN-Mal) to generate BSH. The polypeptide is Putative cysteine ligase BshC (Staphylococcus aureus (strain USA300)).